Reading from the N-terminus, the 785-residue chain is Pre-rRNA-processing protein TSR1 homolog (785 aa).

The disordered stretch occupies residues 1–59; it reads MSTTGHRAGVFKKPSKPHKSWKGKRTKGEITSENRGREGVKQLTRSAHSTHRTISKDAR. Residues 9–25 are compositionally biased toward basic residues; it reads GVFKKPSKPHKSWKGKR. The segment covering 26-40 has biased composition (basic and acidic residues); that stretch reads TKGEITSENRGREGV. A Bms1-type G domain is found at 83–243; it reads APCLVTVVSL…LRILNETKKK (161 aa). The tract at residues 307–426 is disordered; it reads PHPLKAHNKT…GETTASEMMF (120 aa). A compositionally biased stretch (acidic residues) spans 376-409; sequence LDDEDDEDEEDSDEDMDDSDNEEVEDDSEEEEPM.

It belongs to the TRAFAC class translation factor GTPase superfamily. Bms1-like GTPase family. TSR1 subfamily.

It localises to the nucleus. The protein localises to the nucleolus. Required during maturation of the 40S ribosomal subunit in the nucleolus. This Caenorhabditis elegans protein is Pre-rRNA-processing protein TSR1 homolog (tag-151).